A 264-amino-acid polypeptide reads, in one-letter code: Virulence plasmid protein pGP3-D (264 aa).

This chain is Virulence plasmid protein pGP3-D, found in Chlamydia psittaci (Chlamydophila psittaci).